The sequence spans 146 residues: Mediator of RNA polymerase II transcription subunit 10 (146 aa).

It belongs to the Mediator complex subunit 10 family. In terms of assembly, component of the Mediator complex.

It is found in the nucleus. Functionally, component of the Mediator complex, a coactivator involved in the regulated transcription of nearly all RNA polymerase II-dependent genes. Mediator functions as a bridge to convey information from gene-specific regulatory proteins to the basal RNA polymerase II transcription machinery. Mediator is recruited to promoters by direct interactions with regulatory proteins and serves as a scaffold for the assembly of a functional preinitiation complex with RNA polymerase II and the general transcription factors. The protein is Mediator of RNA polymerase II transcription subunit 10 (NUT2) of Scheffersomyces stipitis (strain ATCC 58785 / CBS 6054 / NBRC 10063 / NRRL Y-11545) (Yeast).